Reading from the N-terminus, the 112-residue chain is Nucleoid-associated protein CPR_0056 (112 aa).

Basic and acidic residues predominate over residues Ala-91 to Gly-100. The disordered stretch occupies residues Ala-91–Phe-112. A compositionally biased stretch (gly residues) spans Leu-102–Phe-112.

It belongs to the YbaB/EbfC family. In terms of assembly, homodimer.

The protein resides in the cytoplasm. It localises to the nucleoid. Its function is as follows. Binds to DNA and alters its conformation. May be involved in regulation of gene expression, nucleoid organization and DNA protection. This Clostridium perfringens (strain SM101 / Type A) protein is Nucleoid-associated protein CPR_0056.